Here is an 81-residue protein sequence, read N- to C-terminus: MRPVSPLQLLLVLSLAPQPVLGSPKQYFLKYILEPPPCRSEPGACNMFCTQQEECPEPLQCCSAYCGIVCTSNQAPVLGLS.

The signal sequence occupies residues 1 to 22 (MRPVSPLQLLLVLSLAPQPVLG). Residues 31–74 (YILEPPPCRSEPGACNMFCTQQEECPEPLQCCSAYCGIVCTSNQ) form the WAP domain. Cystine bridges form between Cys-38–Cys-62, Cys-45–Cys-66, Cys-49–Cys-61, and Cys-55–Cys-70.

The protein resides in the secreted. Its function is as follows. Putative acid-stable proteinase inhibitor. The chain is WAP four-disulfide core domain protein 13 (Wfdc13) from Mus musculus (Mouse).